We begin with the raw amino-acid sequence, 76 residues long: Protein OPG146 (76 aa).

Belongs to the orthopoxvirus OPG146 family. In terms of assembly, interacts with capping enzyme RAP94/OPG109, the two large RNA polymerase subunits RPO147/OPG105 and RPO132/OPG151, the two early transcription factor subunits OPG185 and OPG133, one of the capping enzyme subunits OPG113, the nucleoside triphosphate phosphohydrolase OPG123, two core proteins OPG129 and OPG138, and a virion protein OPG064.

The protein localises to the virion. The protein resides in the host cytoplasm. It localises to the host nucleus. In terms of biological role, plays a role in the maturation of immature virions to infectious particles. May also participate in viral transcription. This chain is Protein OPG146 (OPG146), found in Variola virus (isolate Human/India/Ind3/1967) (VARV).